A 142-amino-acid polypeptide reads, in one-letter code: uncharacterized protein (142 aa).

This is an uncharacterized protein from Acanthamoeba polyphaga (Amoeba).